The chain runs to 421 residues: Elsinochrome C biosynthesis regulatory protein elcR (421 aa).

A compositionally biased stretch (polar residues) spans 1–16 (MATQLPSPTATTSHSG). Residues 1–20 (MATQLPSPTATTSHSGNEPR) form a disordered region. The zn(2)-C6 fungal-type DNA-binding region spans 27–54 (CNNCSAQKIRCGKQRPACARCVNKKLQC).

It is found in the nucleus. Its function is as follows. Transcription regulator of the gene cluster that mediates the biosynthesis of elsinochrome C, a perelyenequinone phytotoxin structurally similar to cercosporin. This Phaeosphaeria nodorum (strain SN15 / ATCC MYA-4574 / FGSC 10173) (Glume blotch fungus) protein is Elsinochrome C biosynthesis regulatory protein elcR.